The following is a 665-amino-acid chain: Protein LOW PHOTOSYNTHETIC EFFICIENCY 1, chloroplastic (665 aa).

Residues 1-68 (MQALSILPLK…VSSNRKVLFL (68 aa)) constitute a chloroplast transit peptide. PPR repeat units lie at residues 145–179 (PLQV…KSES), 181–217 (GVIG…GIVP), 218–252 (NIVT…GFEP), 253–283 (NPIT…LREK), 309–344 (GRIC…GVRP), 345–375 (SREE…IRER), 380–414 (SLSV…GPEP), 422–456 (VVSH…GLKP), 457–491 (QRRH…GEKP), 492–526 (TVIS…GIEP), 527–561 (NLYA…GIEP), 562–596 (SVVT…NVEP), and 597–631 (NEIT…GLKL).

The protein belongs to the PPR family. P subfamily. Interacts with HCF173.

It is found in the plastid. The protein resides in the chloroplast thylakoid membrane. Its subcellular location is the chloroplast stroma. Functionally, required for light-regulated photosystem II (PSII) biogenesis and grana thylakoids formation by binding to the 5' UTR of PSII subunit mRNAs (e.g. psbJ, psbN and psbA) in a light-dependent manner through a redox-based mechanism, and facilitating the association of HCF173 with target mRNAs, which encodes PSII reaction center proteins (e.g. J, N and D1), thus regulating its expression by modulating ribosome loading. This chain is Protein LOW PHOTOSYNTHETIC EFFICIENCY 1, chloroplastic, found in Arabidopsis thaliana (Mouse-ear cress).